Consider the following 257-residue polypeptide: UPF0246 protein swp_3736 (257 aa).

The protein belongs to the UPF0246 family.

In Shewanella piezotolerans (strain WP3 / JCM 13877), this protein is UPF0246 protein swp_3736.